The sequence spans 531 residues: MKITGSNLSIYDVADVCMKRATVELDPSQLERVAVAHERTQAWGEAQHPIYGVNTGFGELVPVMIPRQHKRELQENLIRSHAAGGGEPFADDVVRAIMLARLNCLMKGYSGASVETVKLLAEFINRGIHPVIPQQGSLGASGDLSPLSHIALALIGEGTVSFKGQVRKTGDVLREEGLKPLELGFKGGLTLINGTSAMTGAACVALGRAYHLFRLALLATADFVQCLGGSTGPFEERGHLPKNHSGQVIVAREIRKLLAGSQLTSDHQDLMKEMVARSGVGNDVVDTGVYLQDAYTLRAVPQILGPVLDTLDFARKLIEEELNSTNDNPLIFDVPEQTFHGANFHGQYVAMACDYLNIAVTEIGVLAERQLNRLVDPNINGKLPPFLASAHSGLLCGFEGGQYLATSIASENLDLAAPSSIKSLPSNGSNQDVVSMGTTSARKSLRLCENVGTIVSTLIAACNQAGHILGNERFSPPIRELHGELSRSVPLYQDDSPIFELFQTVRAFVGGDGFRAHLVTHLDLAATTASS.

The Proton donor/acceptor role is filled by Tyr51. His81 contributes to the substrate binding site. A cross-link (5-imidazolinone (Ala-Gly)) is located at residues 140–142 (ASG). The residue at position 141 (Ser141) is a 2,3-didehydroalanine (Ser). Substrate contacts are provided by Asn193 and Arg298.

The protein belongs to the TAL/TAM family. Homotetramer; dimer of dimers. In terms of processing, contains an active site 4-methylidene-imidazol-5-one (MIO), which is formed autocatalytically by cyclization and dehydration of residues Ala-Ser-Gly.

It catalyses the reaction L-tyrosine = 3-amino-3-(4-hydroxyphenyl)propanoate. It carries out the reaction L-tyrosine = (E)-4-coumarate + NH4(+). Functionally, has aminomutase and, to a lesser extent, ammonia-lyase activity. Primarily, catalyzes the rearrangement of L-tyrosine to R-beta-tyrosine, which is incorporated into secondary metabolites called chondramides. The aminomutase activity mainly produces R-beta-tyrosine but also S-beta tyrosine in smaller amounts. Does not accept D-tyrosine, L-histidine or L-phenylalanine as substrates. This chain is Tyrosine 2,3-aminomutase, found in Chondromyces crocatus.